The primary structure comprises 290 residues: Protein CREG2 (290 aa).

An N-terminal signal peptide occupies residues 1–31 (MSVRRGRRPARPGTRLSWLLCCSALLSPAAG). N-linked (GlcNAc...) asparagine glycans are attached at residues asparagine 165 and asparagine 166.

Belongs to the CREG family. Post-translationally, it is not sure whether N-glycosylation is on Asn-165 and/or Asn-166. Brain specific mainly in the limbic system and faintly in the spinal cord but not in cerebellum.

The protein resides in the secreted. This chain is Protein CREG2 (CREG2), found in Homo sapiens (Human).